Consider the following 62-residue polypeptide: UPF0434 protein BP2767 (62 aa).

The protein belongs to the UPF0434 family.

This chain is UPF0434 protein BP2767, found in Bordetella pertussis (strain Tohama I / ATCC BAA-589 / NCTC 13251).